A 464-amino-acid chain; its full sequence is Glutamate decarboxylase (464 aa).

Position 274 is an N6-(pyridoxal phosphate)lysine (Lys274).

This sequence belongs to the group II decarboxylase family. Requires pyridoxal 5'-phosphate as cofactor.

It carries out the reaction L-glutamate + H(+) = 4-aminobutanoate + CO2. In terms of biological role, catalyzes the pyridoxal-dependent decarboxylation of glutamate to produce 4-aminobutanoate. Has weak activity with aspartate, but cannot complement an E.coli panD deletion mutant. The protein is Glutamate decarboxylase of Aliivibrio fischeri (strain ATCC 700601 / ES114) (Vibrio fischeri).